The primary structure comprises 230 residues: MRITWLGHAAFEVEIDGVNVLIDPFLSGNPKAAKSPDEVDPDLVLVTHGHGDHLGDAVEICKRTGATLVGIYEIAVYAQGQGVENVEEMNIGGTIEVEGLEITQVPAWHSSEIVEDGEIVAGGTPVGYVVSGEEGSVYHAGDTGLSMDMKLIGELYEPEVALLPIGSRFTMGPKEAAKAVELIEPEVAIPMHYGTFPPIEQDPEEFKREVEELGLDVEVVILEPGESYER.

The protein belongs to the UPF0173 family.

This chain is UPF0173 metal-dependent hydrolase MK1542, found in Methanopyrus kandleri (strain AV19 / DSM 6324 / JCM 9639 / NBRC 100938).